The primary structure comprises 396 residues: 1-deoxy-D-xylulose 5-phosphate reductoisomerase (396 aa).

NADPH contacts are provided by Thr17, Gly18, Ser19, Ile20, Asn47, and Asn130. Lys131 lines the 1-deoxy-D-xylulose 5-phosphate pocket. NADPH is bound at residue Glu132. Asp156 is a binding site for Mn(2+). 1-deoxy-D-xylulose 5-phosphate is bound by residues Ser157, Glu158, Ser182, and His205. Mn(2+) is bound at residue Glu158. Residue Gly211 participates in NADPH binding. The 1-deoxy-D-xylulose 5-phosphate site is built by Ser218, Asn223, Lys224, and Glu227. Residue Glu227 participates in Mn(2+) binding.

This sequence belongs to the DXR family. Requires Mg(2+) as cofactor. Mn(2+) serves as cofactor.

It catalyses the reaction 2-C-methyl-D-erythritol 4-phosphate + NADP(+) = 1-deoxy-D-xylulose 5-phosphate + NADPH + H(+). The protein operates within isoprenoid biosynthesis; isopentenyl diphosphate biosynthesis via DXP pathway; isopentenyl diphosphate from 1-deoxy-D-xylulose 5-phosphate: step 1/6. Catalyzes the NADPH-dependent rearrangement and reduction of 1-deoxy-D-xylulose-5-phosphate (DXP) to 2-C-methyl-D-erythritol 4-phosphate (MEP). The polypeptide is 1-deoxy-D-xylulose 5-phosphate reductoisomerase (Rhizobium etli (strain ATCC 51251 / DSM 11541 / JCM 21823 / NBRC 15573 / CFN 42)).